The following is a 204-amino-acid chain: Probable GTP-binding protein EngB (204 aa).

Positions 22 to 197 (GFPEIAFVGR…LAEFDNVLSI (176 aa)) constitute an EngB-type G domain. GTP contacts are provided by residues 30–37 (GRSNVGKS), 57–61 (GKTRQ), 75–78 (DLPG), 144–147 (NKVD), and 176–178 (FSA). Mg(2+) is bound by residues Ser-37 and Thr-59.

This sequence belongs to the TRAFAC class TrmE-Era-EngA-EngB-Septin-like GTPase superfamily. EngB GTPase family. Mg(2+) is required as a cofactor.

Necessary for normal cell division and for the maintenance of normal septation. The protein is Probable GTP-binding protein EngB of Ruminiclostridium cellulolyticum (strain ATCC 35319 / DSM 5812 / JCM 6584 / H10) (Clostridium cellulolyticum).